A 1108-amino-acid chain; its full sequence is Retinal guanylyl cyclase 2 (1108 aa).

Positions methionine 1–threonine 50 are cleaved as a signal peptide. Residues leucine 51–alanine 467 are Extracellular-facing. Cysteine 104 and cysteine 132 are joined by a disulfide. Residues phenylalanine 468–isoleucine 490 traverse the membrane as a helical segment. Residues arginine 491 to proline 1108 are Cytoplasmic-facing. The region spanning phenylalanine 532–phenylalanine 812 is the Protein kinase domain. The Guanylate cyclase domain maps to threonine 884 to glutamate 1014.

The protein belongs to the adenylyl cyclase class-4/guanylyl cyclase family. Homodimer. Interacts with RD3; promotes the exit of GUCY2F from the endoplasmic reticulum and its trafficking to the photoreceptor outer segments. Post-translationally, there are 9 conserved cysteine residues in sensory guanylate cyclases, 6 in the extracellular domain, which may be involved in intra- or interchain disulfide bonds. As to expression, retina. Localized exclusively in the outer nuclear layer and inner segments of the rod and cone photoreceptor cells.

The protein localises to the photoreceptor outer segment membrane. The catalysed reaction is GTP = 3',5'-cyclic GMP + diphosphate. Activated by GUCA1B when free calcium ions concentration is low, and inhibited by GUCA1B when free calcium ions concentration is high. Inhibited by RD3. In terms of biological role, responsible for the synthesis of cyclic GMP (cGMP) in rods and cones of photoreceptors. Plays an essential role in phototransduction, by mediating cGMP replenishment. May also participate in the trafficking of membrane-asociated proteins to the photoreceptor outer segment membrane. The sequence is that of Retinal guanylyl cyclase 2 (GUCY2F) from Homo sapiens (Human).